The chain runs to 308 residues: Glutaminase (308 aa).

Positions 66, 117, 161, 168, 192, 244, and 262 each coordinate substrate.

Belongs to the glutaminase family. As to quaternary structure, homotetramer.

It catalyses the reaction L-glutamine + H2O = L-glutamate + NH4(+). The sequence is that of Glutaminase from Proteus mirabilis (strain HI4320).